We begin with the raw amino-acid sequence, 492 residues long: UDP-N-acetylmuramoyl-L-alanyl-D-glutamate--2,6-diaminopimelate ligase (492 aa).

A UDP-N-acetyl-alpha-D-muramoyl-L-alanyl-D-glutamate-binding site is contributed by S30. Residue 114 to 120 (GTNGKTS) coordinates ATP. Residues 156–157 (TT), S183, Q189, and R191 contribute to the UDP-N-acetyl-alpha-D-muramoyl-L-alanyl-D-glutamate site. K223 carries the N6-carboxylysine modification. Meso-2,6-diaminopimelate contacts are provided by residues R389, 413–416 (DNPR), G462, and E466. The Meso-diaminopimelate recognition motif signature appears at 413–416 (DNPR).

The protein belongs to the MurCDEF family. MurE subfamily. Mg(2+) serves as cofactor. Carboxylation is probably crucial for Mg(2+) binding and, consequently, for the gamma-phosphate positioning of ATP.

The protein resides in the cytoplasm. It carries out the reaction UDP-N-acetyl-alpha-D-muramoyl-L-alanyl-D-glutamate + meso-2,6-diaminopimelate + ATP = UDP-N-acetyl-alpha-D-muramoyl-L-alanyl-gamma-D-glutamyl-meso-2,6-diaminopimelate + ADP + phosphate + H(+). It functions in the pathway cell wall biogenesis; peptidoglycan biosynthesis. Functionally, catalyzes the addition of meso-diaminopimelic acid to the nucleotide precursor UDP-N-acetylmuramoyl-L-alanyl-D-glutamate (UMAG) in the biosynthesis of bacterial cell-wall peptidoglycan. This Neisseria meningitidis serogroup A / serotype 4A (strain DSM 15465 / Z2491) protein is UDP-N-acetylmuramoyl-L-alanyl-D-glutamate--2,6-diaminopimelate ligase.